A 548-amino-acid polypeptide reads, in one-letter code: Palmitoyltransferase pfa3 (548 aa).

Residues 1 to 32 (MMATLATSPPTSPTWPKRRPRAWALRCERYCC) lie on the Cytoplasmic side of the membrane. The chain crosses the membrane as a helical span at residues 33-53 (AAATYFPLAFVYSLTTWAVYV). Over 54–70 (EASIGLKPSRSPWIGLP) the chain is Extracellular. The helical transmembrane segment at 71–91 (TSILGVLLYICLNASYTVAVF) threads the bilayer. At 92-173 (TDPGSPLTTG…ATCVGLYNYK (82 aa)) the chain is on the cytoplasmic side. In terms of domain architecture, DHHC spans 130–180 (RYCKKCQCPKPDRAHHCSTCKRCVLKMDHHCPWLATCVGLYNYKAFLLFLI). Residues 174–194 (AFLLFLIYTSLFCWVDFAVSA) form a helical membrane-spanning segment. At 195–215 (TWIWTEVFNDAPYLETMLPVN) the chain is on the extracellular side. Residues 216 to 236 (VVLLAILGGIIGLVLTGFTAW) form a helical membrane-spanning segment. Residues 237-548 (HISLAVRGMT…EDSSEWRDWD (312 aa)) lie on the Cytoplasmic side of the membrane. Disordered stretches follow at residues 313–339 (RAEE…DQLT) and 463–548 (NPHQ…RDWD). Residues 508–535 (DPLNQQSVPANGAVNQLQKANEASSATT) show a composition bias toward polar residues. The segment covering 536-548 (NRREDSSEWRDWD) has biased composition (basic and acidic residues).

This sequence belongs to the DHHC palmitoyltransferase family. PFA3 subfamily. In terms of processing, autopalmitoylated.

The protein localises to the vacuole membrane. It catalyses the reaction L-cysteinyl-[protein] + hexadecanoyl-CoA = S-hexadecanoyl-L-cysteinyl-[protein] + CoA. Palmitoyltransferase specific for VAC8. Palmitoylates VAC8 at one or more of its N-terminal cysteine residues, which is required for its proper membrane localization. In Aspergillus fumigatus (strain ATCC MYA-4609 / CBS 101355 / FGSC A1100 / Af293) (Neosartorya fumigata), this protein is Palmitoyltransferase pfa3 (pfa3).